A 476-amino-acid chain; its full sequence is MEKRLRLAPSPTGLFHIGTARTALFNWLYAQKIGGKFLIRIEDTDFLRSKSEYTKNILEGLKWLGLKWDEEPIKQSDRISIHKSYIKKLLECGAAYRCFTSEDEISELREEQKKKGLPPKHDNRHRSLSKEEIETFISQGRTSVIRFKIDEKIEIKWIDQIRGEIKWQGKDLGGDLVLSRRAKGYEIGDPLYNLAVVVDDNFMNITHVVRGEDHISNTAKQILIYKALNFNLPTFSHTPLILNSEGKKLSKRDCVTSIDEFREMGYLPEALSNYMAFLGWSPKSADREILSLEEISKIFDLSEINKAGAKFSWEKLNWINSQYIKNIESIKLIEIMRKYWDDNGWKPPSEEWANKLAILIRDSMTLLKDSIDQSKPFFLIPTIQKEGQDFLEIRESKLSLKLILNYLIEKNTIKLNKEKAKEIINEISKKHNIKKGILMKSLRVAFFGSLSGPDLIQSWELFAESKTDRTRIERCL.

A 'HIGH' region motif is present at residues 9–19; it reads PSPTGLFHIGT. Residues 248–252 carry the 'KMSKS' region motif; sequence KLSKR. K251 is a binding site for ATP.

The protein belongs to the class-I aminoacyl-tRNA synthetase family. Glutamate--tRNA ligase type 1 subfamily. As to quaternary structure, monomer.

The protein localises to the cytoplasm. It carries out the reaction tRNA(Glu) + L-glutamate + ATP = L-glutamyl-tRNA(Glu) + AMP + diphosphate. Functionally, catalyzes the attachment of glutamate to tRNA(Glu) in a two-step reaction: glutamate is first activated by ATP to form Glu-AMP and then transferred to the acceptor end of tRNA(Glu). This is Glutamate--tRNA ligase from Prochlorococcus marinus (strain MIT 9301).